A 464-amino-acid polypeptide reads, in one-letter code: Kynureninase 2 (464 aa).

Pyridoxal 5'-phosphate-binding positions include L135, T136, 163-166 (FPSD), D248, H251, and Y273. K274 bears the N6-(pyridoxal phosphate)lysine mark. Pyridoxal 5'-phosphate-binding residues include W313 and N341.

It belongs to the kynureninase family. As to quaternary structure, homodimer. Requires pyridoxal 5'-phosphate as cofactor.

The protein localises to the cytoplasm. It catalyses the reaction L-kynurenine + H2O = anthranilate + L-alanine + H(+). The catalysed reaction is 3-hydroxy-L-kynurenine + H2O = 3-hydroxyanthranilate + L-alanine + H(+). The protein operates within amino-acid degradation; L-kynurenine degradation; L-alanine and anthranilate from L-kynurenine: step 1/1. It participates in cofactor biosynthesis; NAD(+) biosynthesis; quinolinate from L-kynurenine: step 2/3. Its function is as follows. Catalyzes the cleavage of L-kynurenine (L-Kyn) and L-3-hydroxykynurenine (L-3OHKyn) into anthranilic acid (AA) and 3-hydroxyanthranilic acid (3-OHAA), respectively. The protein is Kynureninase 2 (bna5-2) of Aspergillus fumigatus (strain CBS 144.89 / FGSC A1163 / CEA10) (Neosartorya fumigata).